A 500-amino-acid chain; its full sequence is ATP synthase subunit alpha (500 aa).

Position 167–174 (167–174 (GDRQTGKT)) interacts with ATP.

It belongs to the ATPase alpha/beta chains family. As to quaternary structure, F-type ATPases have 2 components, CF(1) - the catalytic core - and CF(0) - the membrane proton channel. CF(1) has five subunits: alpha(3), beta(3), gamma(1), delta(1), epsilon(1). CF(0) has three main subunits: a(1), b(2) and c(9-12). The alpha and beta chains form an alternating ring which encloses part of the gamma chain. CF(1) is attached to CF(0) by a central stalk formed by the gamma and epsilon chains, while a peripheral stalk is formed by the delta and b chains.

Its subcellular location is the cell inner membrane. The enzyme catalyses ATP + H2O + 4 H(+)(in) = ADP + phosphate + 5 H(+)(out). Functionally, produces ATP from ADP in the presence of a proton gradient across the membrane. The alpha chain is a regulatory subunit. This chain is ATP synthase subunit alpha, found in Wolinella succinogenes (strain ATCC 29543 / DSM 1740 / CCUG 13145 / JCM 31913 / LMG 7466 / NCTC 11488 / FDC 602W) (Vibrio succinogenes).